Reading from the N-terminus, the 139-residue chain is Protein LTO1 homolog (139 aa).

It belongs to the LTO1 family.

This Dictyostelium discoideum (Social amoeba) protein is Protein LTO1 homolog.